The sequence spans 304 residues: Homoserine O-acetyltransferase (304 aa).

Catalysis depends on Cys-142, which acts as the Acyl-thioester intermediate. The substrate site is built by Lys-163 and Ser-192. Catalysis depends on His-235, which acts as the Proton acceptor. Glu-237 is a catalytic residue. Arg-249 lines the substrate pocket.

This sequence belongs to the MetA family.

Its subcellular location is the cytoplasm. The enzyme catalyses L-homoserine + acetyl-CoA = O-acetyl-L-homoserine + CoA. It participates in amino-acid biosynthesis; L-methionine biosynthesis via de novo pathway; O-acetyl-L-homoserine from L-homoserine: step 1/1. Functionally, transfers an acetyl group from acetyl-CoA to L-homoserine, forming acetyl-L-homoserine. In Clostridium beijerinckii (strain ATCC 51743 / NCIMB 8052) (Clostridium acetobutylicum), this protein is Homoserine O-acetyltransferase.